Here is a 406-residue protein sequence, read N- to C-terminus: Putative colanic acid biosynthesis glycosyltransferase WcaL (406 aa).

Belongs to the glycosyltransferase group 1 family. Glycosyltransferase 4 subfamily.

It participates in slime biogenesis; slime polysaccharide biosynthesis. The protein is Putative colanic acid biosynthesis glycosyltransferase WcaL (wcaL) of Salmonella typhimurium (strain LT2 / SGSC1412 / ATCC 700720).